The following is a 162-amino-acid chain: Anaerobic nitrite reductase (162 aa).

The residue at position 2 (serine 2) is an N-acetylserine. One can recognise a Globin domain in the interval valine 9 to lysine 158. The Homodimerization motif lies at glutamate 42 to serine 46. Residues serine 52, lysine 66, histidine 70, arginine 100, and histidine 105 each contribute to the heme b site. Positions asparagine 112–glutamate 124 match the Homodimerization motif.

Belongs to the plant globin family. As to quaternary structure, homodimer with distinct heme coordination in each subunits. Heme b is required as a cofactor. In terms of tissue distribution, root nodules.

The protein resides in the cytoplasm. The protein localises to the nucleus. The enzyme catalyses Fe(III)-heme b-[protein] + nitric oxide + H2O = Fe(II)-heme b-[protein] + nitrite + 2 H(+). In terms of biological role, phytoglobin that reduces nitrite to nitric oxide (NO) under anoxic conditions (e.g. during flooding or in waterlogged soil) and upon root nodulation. Required for general plant development and during nodulation, especially for the onset of symbiosis. Monitors nitric oxide (NO) levels during early phase of the nitrogen-fixing symbiosis and buffers oxygen in functioning nodules. May not function as an oxygen storage or transport protein. Has an unusually high affinity for O(2) through a hexacoordinate heme iron because of a very low dissociation constant. In Parasponia andersonii (Sponia andersonii), this protein is Anaerobic nitrite reductase.